We begin with the raw amino-acid sequence, 284 residues long: Bifunctional protein FolD (284 aa).

NADP(+)-binding positions include 164–166 and S189; that span reads GRS.

The protein belongs to the tetrahydrofolate dehydrogenase/cyclohydrolase family. In terms of assembly, homodimer.

The catalysed reaction is (6R)-5,10-methylene-5,6,7,8-tetrahydrofolate + NADP(+) = (6R)-5,10-methenyltetrahydrofolate + NADPH. It carries out the reaction (6R)-5,10-methenyltetrahydrofolate + H2O = (6R)-10-formyltetrahydrofolate + H(+). It functions in the pathway one-carbon metabolism; tetrahydrofolate interconversion. Functionally, catalyzes the oxidation of 5,10-methylenetetrahydrofolate to 5,10-methenyltetrahydrofolate and then the hydrolysis of 5,10-methenyltetrahydrofolate to 10-formyltetrahydrofolate. The chain is Bifunctional protein FolD from Listeria monocytogenes serovar 1/2a (strain ATCC BAA-679 / EGD-e).